Consider the following 272-residue polypeptide: Thiazole synthase (272 aa).

K111 serves as the catalytic Schiff-base intermediate with DXP. Residues G172, 198 to 199 (AG), and 220 to 221 (NS) contribute to the 1-deoxy-D-xylulose 5-phosphate site. The interval 249–272 (SGRLPRRDQASASSPTTGLVQSPQ) is disordered. Positions 258 to 272 (ASASSPTTGLVQSPQ) are enriched in polar residues.

It belongs to the ThiG family. In terms of assembly, homotetramer. Forms heterodimers with either ThiH or ThiS.

The protein localises to the cytoplasm. The enzyme catalyses [ThiS sulfur-carrier protein]-C-terminal-Gly-aminoethanethioate + 2-iminoacetate + 1-deoxy-D-xylulose 5-phosphate = [ThiS sulfur-carrier protein]-C-terminal Gly-Gly + 2-[(2R,5Z)-2-carboxy-4-methylthiazol-5(2H)-ylidene]ethyl phosphate + 2 H2O + H(+). The protein operates within cofactor biosynthesis; thiamine diphosphate biosynthesis. Functionally, catalyzes the rearrangement of 1-deoxy-D-xylulose 5-phosphate (DXP) to produce the thiazole phosphate moiety of thiamine. Sulfur is provided by the thiocarboxylate moiety of the carrier protein ThiS. In vitro, sulfur can be provided by H(2)S. The polypeptide is Thiazole synthase (Synechococcus sp. (strain CC9605)).